Consider the following 423-residue polypeptide: Histidine--tRNA ligase (423 aa).

This sequence belongs to the class-II aminoacyl-tRNA synthetase family. In terms of assembly, homodimer.

It localises to the cytoplasm. It catalyses the reaction tRNA(His) + L-histidine + ATP = L-histidyl-tRNA(His) + AMP + diphosphate + H(+). This is Histidine--tRNA ligase from Haemophilus influenzae (strain PittEE).